The primary structure comprises 382 residues: tRNA (guanine(26)-N(2))-dimethyltransferase (382 aa).

The region spanning Thr4–Val370 is the Trm1 methyltransferase domain. S-adenosyl-L-methionine is bound by residues Arg44, Arg69, Asp87, Asp113, and Ala114. Zn(2+) is bound by residues Cys244, Cys247, Cys261, and Cys264.

This sequence belongs to the class I-like SAM-binding methyltransferase superfamily. Trm1 family.

The catalysed reaction is guanosine(26) in tRNA + 2 S-adenosyl-L-methionine = N(2)-dimethylguanosine(26) in tRNA + 2 S-adenosyl-L-homocysteine + 2 H(+). Functionally, dimethylates a single guanine residue at position 26 of a number of tRNAs using S-adenosyl-L-methionine as donor of the methyl groups. The sequence is that of tRNA (guanine(26)-N(2))-dimethyltransferase from Metallosphaera sedula (strain ATCC 51363 / DSM 5348 / JCM 9185 / NBRC 15509 / TH2).